Reading from the N-terminus, the 208-residue chain is Putative chemokine-related protein FP248 (208 aa).

The signal sequence occupies residues 1 to 23 (MGTGGSLLCGCSLVLSCLCPSAS). Asn29 is a glycosylation site (N-linked (GlcNAc...) asparagine).

The protein resides in the secreted. This is Putative chemokine-related protein FP248 from Homo sapiens (Human).